We begin with the raw amino-acid sequence, 914 residues long: Ubiquitin carboxyl-terminal hydrolase 20 (914 aa).

A UBP-type zinc finger spans residues 6–111; the sequence is DLCPHLDSIG…GSSSKFSEQD (106 aa). Residues C8, H10, C30, C33, C43, C48, C53, H60, H64, H70, C83, and C86 each contribute to the Zn(2+) site. Phosphoserine occurs at positions 112, 132, and 134. The region spanning 145 to 685 is the USP domain; the sequence is TGMKNLGNSC…EGYVLFYRKS (541 aa). Residue C154 is the Nucleophile of the active site. Disordered stretches follow at residues 257 to 347 and 360 to 415; these read LTEA…VDED and QPAE…ASPV. A Phosphothreonine modification is found at T258. Residues 259-279 show a composition bias toward basic and acidic residues; the sequence is EARDSDSSDTDEKREGDRSPS. The residue at position 305 (S305) is a Phosphoserine. Residues 316-332 show a composition bias toward basic and acidic residues; the sequence is EAGRAISEKERMKDRKF. S368 is subject to Phosphoserine. At T377 the chain carries Phosphothreonine. S408 and S413 each carry phosphoserine. Catalysis depends on H643, which acts as the Proton acceptor. 2 DUSP domains span residues 687-780 and 789-892; these read EEAM…LYVC and ALAK…RQSV.

It belongs to the peptidase C19 family. USP20/USP33 subfamily. As to quaternary structure, interacts with VHL, leading to its ubiquitination and subsequent degradation. Interacts with CCP110. Interacts with DIO2. Interacts with HIF1A. Interacts with ADRB2. Interacts with USP18. Ubiquitinated via a VHL-dependent pathway for proteasomal degradation.

The protein resides in the cytoplasm. The protein localises to the endoplasmic reticulum. It localises to the perinuclear region. It is found in the cytoskeleton. Its subcellular location is the microtubule organizing center. The protein resides in the centrosome. The catalysed reaction is Thiol-dependent hydrolysis of ester, thioester, amide, peptide and isopeptide bonds formed by the C-terminal Gly of ubiquitin (a 76-residue protein attached to proteins as an intracellular targeting signal).. Functionally, deubiquitinating enzyme that plays a role in many cellular processes including autophagy, cellular antiviral response or membrane protein biogenesis. Attenuates TLR4-mediated NF-kappa-B signaling by cooperating with beta-arrestin-2/ARRB2 and inhibiting TRAF6 autoubiquitination. Promotes cellular antiviral responses by deconjugating 'Lys-33' and 'Lys-48'-linked ubiquitination of STING1 leading to its stabilization. Plays an essential role in autophagy induction by regulating the ULK1 stability through deubiquitination of ULK1. Acts as a positive regulator for NF-kappa-B activation by TNF-alpha through deubiquitinating 'Lys-48'-linked polyubiquitination of SQSTM1, leading to its increased stability. Acts as a regulator of G-protein coupled receptor (GPCR) signaling by mediating the deubiquitination beta-2 adrenergic receptor (ADRB2). Plays a central role in ADRB2 recycling and resensitization after prolonged agonist stimulation by constitutively binding ADRB2, mediating deubiquitination of ADRB2 and inhibiting lysosomal trafficking of ADRB2. Upon dissociation, it is probably transferred to the translocated beta-arrestins, possibly leading to beta-arrestins deubiquitination and disengagement from ADRB2. This suggests the existence of a dynamic exchange between the ADRB2 and beta-arrestins. Deubiquitinates DIO2, thereby regulating thyroid hormone regulation. Deubiquitinates HIF1A, leading to stabilize HIF1A and enhance HIF1A-mediated activity. Deubiquitinates MCL1, a pivotal member of the anti-apoptotic Bcl-2 protein family to regulate its stability. Within the endoplasmic reticulum, participates with USP33 in the rescue of post-translationally targeted membrane proteins that are inappropriately ubiquitinated by the cytosolic protein quality control in the cytosol. In Homo sapiens (Human), this protein is Ubiquitin carboxyl-terminal hydrolase 20 (USP20).